Reading from the N-terminus, the 512-residue chain is Lysine--tRNA ligase (512 aa).

Residues E421 and E428 each contribute to the Mg(2+) site.

This sequence belongs to the class-II aminoacyl-tRNA synthetase family. Homodimer. Mg(2+) is required as a cofactor.

It is found in the cytoplasm. The enzyme catalyses tRNA(Lys) + L-lysine + ATP = L-lysyl-tRNA(Lys) + AMP + diphosphate. In Aeromonas salmonicida (strain A449), this protein is Lysine--tRNA ligase.